Here is a 301-residue protein sequence, read N- to C-terminus: Prestalk A differentiation protein A (301 aa).

This sequence belongs to the NmrA-type oxidoreductase family.

Functionally, involved in development and cell differentiation. The polypeptide is Prestalk A differentiation protein A (padA) (Dictyostelium discoideum (Social amoeba)).